Consider the following 516-residue polypeptide: Rho guanine nucleotide exchange factor 9 (516 aa).

One can recognise an SH3 domain in the interval Asp8–Asn67. Residues Arg100 to Glu110 form an interaction with GPHN region. Residues Met103–Arg287 enclose the DH domain. Residues Glu318–Lys425 enclose the PH domain. A disordered region spans residues Pro453–Tyr480. The residue at position 502 (Ser502) is a Phosphoserine.

In terms of assembly, interacts with GPHN. As to expression, detected in brain. Detected at low levels in heart.

The protein localises to the cytoplasm. The protein resides in the postsynaptic density. Functionally, acts as a guanine nucleotide exchange factor (GEF) for CDC42. Promotes formation of GPHN clusters. This is Rho guanine nucleotide exchange factor 9 (ARHGEF9) from Homo sapiens (Human).